The sequence spans 216 residues: U1 small nuclear ribonucleoprotein A (216 aa).

RRM domains lie at Q7–S86 and Q142–K216. The tract at residues T97–Q142 is disordered. Over residues S126–Q142 the composition is skewed to polar residues.

Belongs to the RRM U1 A/B'' family. Belongs to the spliceosome where it is associated with snRNP U1. Interacts with the SMN complex.

The protein resides in the nucleus. In terms of biological role, binds stem loop II of U1 snRNA. It is the first snRNP to interact with pre-mRNA. This interaction is required for the subsequent binding of U2 snRNP and the U4/U6/U5 tri-snRNP. Plays a role in regulating sex-lethal splicing. The chain is U1 small nuclear ribonucleoprotein A (snf) from Drosophila melanogaster (Fruit fly).